Consider the following 320-residue polypeptide: Ferrochelatase (320 aa).

Residues His194 and Glu275 each coordinate Fe cation.

It belongs to the ferrochelatase family. In terms of assembly, monomer.

It is found in the cytoplasm. It catalyses the reaction heme b + 2 H(+) = protoporphyrin IX + Fe(2+). Its pathway is porphyrin-containing compound metabolism; protoheme biosynthesis; protoheme from protoporphyrin-IX: step 1/1. Catalyzes the ferrous insertion into protoporphyrin IX. The sequence is that of Ferrochelatase from Escherichia coli O81 (strain ED1a).